The following is a 278-amino-acid chain: Extracellular metalloprotease MCYG_03238 (278 aa).

The first 19 residues, Met1–Ala19, serve as a signal peptide directing secretion. A glycan (N-linked (GlcNAc...) asparagine) is linked at Asn52. His170 contributes to the Zn(2+) binding site. Glu171 is a catalytic residue. Residue His174 participates in Zn(2+) binding. A disulfide bridge connects residues Cys209 and Cys255.

Belongs to the peptidase M43B family.

It is found in the secreted. Its function is as follows. Secreted metalloproteinase that allows assimilation of proteinaceous substrates. Plays a pivotal role as a pathogenicity determinant during infections and contributes to the ability of the pathogen to persist within the mammalian host. This Arthroderma otae (strain ATCC MYA-4605 / CBS 113480) (Microsporum canis) protein is Extracellular metalloprotease MCYG_03238.